Reading from the N-terminus, the 400-residue chain is Vitamin K-dependent protein Z (400 aa).

The N-terminal stretch at 1–23 is a signal peptide; the sequence is MAGCVPLLQGLVLVLALHRVEPS. Positions 24–40 are excised as a propeptide; sequence VFLPASKANDVLVRWKR. Positions 41–86 constitute a Gla domain; sequence AGSYLLEELFEGNLEKECYEEICVYEEAREVFENEVVTDEFWRRYK. 4-carboxyglutamate occurs at positions 47, 48, 51, 55, 57, 60, 61, 66, 67, 70, 73, 75, and 80. A disulfide bridge links Cys58 with Cys63. EGF-like domains follow at residues 87–123 and 125–166; these read GGSP…SNCE and AKNE…KQCV. 7 disulfide bridges follow: Cys91–Cys102, Cys96–Cys111, Cys113–Cys122, Cys129–Cys141, Cys137–Cys150, Cys152–Cys165, and Cys203–Cys219. The O-linked (Glc...) serine glycan is linked to Ser93. N-linked (GlcNAc...) asparagine glycosylation occurs at Asn99. Residue Asp104 is modified to (3R)-3-hydroxyaspartate. Residues 175–400 enclose the Peptidase S1 domain; that stretch reads VLTSEKRAPD…YSLWFKQIMN (226 aa). N-linked (GlcNAc...) asparagine glycans are attached at residues Asn225, Asn233, Asn306, and Asn332. The cysteines at positions 327 and 341 are disulfide-linked.

This sequence belongs to the peptidase S1 family. Interacts with SERPINA10. Post-translationally, the iron and 2-oxoglutarate dependent 3-hydroxylation of aspartate and asparagine is (R) stereospecific within EGF domains. Plasma.

It localises to the secreted. Its function is as follows. Appears to assist hemostasis by binding thrombin and promoting its association with phospholipid vesicles. Inhibits activity of the coagulation protease factor Xa in the presence of SERPINA10, calcium and phospholipids. The chain is Vitamin K-dependent protein Z (PROZ) from Homo sapiens (Human).